The sequence spans 366 residues: Aminomethyltransferase (366 aa).

It belongs to the GcvT family. The glycine cleavage system is composed of four proteins: P, T, L and H.

The enzyme catalyses N(6)-[(R)-S(8)-aminomethyldihydrolipoyl]-L-lysyl-[protein] + (6S)-5,6,7,8-tetrahydrofolate = N(6)-[(R)-dihydrolipoyl]-L-lysyl-[protein] + (6R)-5,10-methylene-5,6,7,8-tetrahydrofolate + NH4(+). Functionally, the glycine cleavage system catalyzes the degradation of glycine. The polypeptide is Aminomethyltransferase (Bordetella avium (strain 197N)).